We begin with the raw amino-acid sequence, 205 residues long: Probable DNA-binding protein (205 aa).

Positions 140 to 168 (GEGDGAPRPACPDFSTRGAETGNQGVQPG) are disordered.

The chain is Probable DNA-binding protein from Homo sapiens (Human).